The primary structure comprises 627 residues: Altered inheritance of mitochondria protein 9, mitochondrial (627 aa).

The transit peptide at 1 to 43 (MIRYTVAGHSRRCVVGASKRVGAIKCITVAATKRFISNKSNEV) directs the protein to the mitochondrion.

It belongs to the AIM9 family.

It is found in the mitochondrion. This Saccharomyces cerevisiae (strain JAY291) (Baker's yeast) protein is Altered inheritance of mitochondria protein 9, mitochondrial (AIM9).